A 132-amino-acid polypeptide reads, in one-letter code: CLAVATA3/ESR (CLE)-related protein 2-B (132 aa).

The N-terminal stretch at 1–26 (MASRMGMVAILSLFVCALVASTSVNA) is a signal peptide. Positions 68–132 (NRASKQLDRE…IGPPPFLDRY (65 aa)) are disordered. Hydroxyproline is present on residues Pro-82 and Pro-85. Residue Pro-85 is glycosylated (O-linked (Ara...) hydroxyproline).

Belongs to the CLV3/ESR signal peptide family. The O-glycosylation (arabinosylation) of the hydroxyproline Pro-85 enhances binding affinity of the ESR2Bp peptide for its receptor. Seed endosperm.

The protein localises to the secreted. The protein resides in the extracellular space. Functionally, extracellular signal peptide that regulates cell fate. This is CLAVATA3/ESR (CLE)-related protein 2-B from Zea mays (Maize).